The primary structure comprises 333 residues: DNA-directed RNA polymerase subunit alpha (333 aa).

Positions 1–234 (MQISVNEFLT…QQLAAFVDLK (234 aa)) are alpha N-terminal domain (alpha-NTD). The alpha C-terminal domain (alpha-CTD) stretch occupies residues 248-333 (IDPILLRPVD…SLKKDDKATA (86 aa)).

It belongs to the RNA polymerase alpha chain family. In terms of assembly, homodimer. The RNAP catalytic core consists of 2 alpha, 1 beta, 1 beta' and 1 omega subunit. When a sigma factor is associated with the core the holoenzyme is formed, which can initiate transcription.

The catalysed reaction is RNA(n) + a ribonucleoside 5'-triphosphate = RNA(n+1) + diphosphate. Its function is as follows. DNA-dependent RNA polymerase catalyzes the transcription of DNA into RNA using the four ribonucleoside triphosphates as substrates. The chain is DNA-directed RNA polymerase subunit alpha from Ectopseudomonas mendocina (strain ymp) (Pseudomonas mendocina).